A 478-amino-acid polypeptide reads, in one-letter code: Islet cell autoantigen 1 (478 aa).

One can recognise an AH domain in the interval 50-253 (ASDADLDAKL…TSHTMAAIHE (204 aa)). Over residues 306 to 317 (EHKDSSAYKTEE) the composition is skewed to basic and acidic residues. Disordered stretches follow at residues 306–365 (EHKD…SGDK) and 398–422 (LKEP…GFLP).

Predominantly expressed in brain, pancreas and stomach mucosa. High expression also found in stomach muscle and testis.

It localises to the cytoplasm. The protein resides in the cytosol. Its subcellular location is the golgi apparatus membrane. It is found in the cytoplasmic vesicle. The protein localises to the secretory vesicle membrane. It localises to the secretory vesicle. The protein resides in the synaptic vesicle membrane. May play a role in neurotransmitter secretion. The sequence is that of Islet cell autoantigen 1 from Mus musculus (Mouse).